Here is an 88-residue protein sequence, read N- to C-terminus: Putative sulfur carrier protein AF_0554 (88 aa).

The Cysteine persulfide intermediate role is filled by C26.

It belongs to the sulfur carrier protein TusA family.

This Archaeoglobus fulgidus (strain ATCC 49558 / DSM 4304 / JCM 9628 / NBRC 100126 / VC-16) protein is Putative sulfur carrier protein AF_0554.